The primary structure comprises 471 residues: Isochorismate synthase MenF (471 aa).

Residue K226 is the Proton acceptor of the active site. The active-site Proton donor is the E275. Mg(2+)-binding residues include E319 and E454.

Belongs to the isochorismate synthase family. The cofactor is Mg(2+).

The catalysed reaction is chorismate = isochorismate. Its pathway is quinol/quinone metabolism; 1,4-dihydroxy-2-naphthoate biosynthesis; 1,4-dihydroxy-2-naphthoate from chorismate: step 1/7. It functions in the pathway quinol/quinone metabolism; menaquinone biosynthesis. Catalyzes the conversion of chorismate to isochorismate. This Bacillus subtilis (strain 168) protein is Isochorismate synthase MenF.